We begin with the raw amino-acid sequence, 435 residues long: Probable protein arginine N-methyltransferase 6 (435 aa).

The disordered stretch occupies residues Met1–Gly48. A compositionally biased stretch (basic and acidic residues) spans His12–Gln25. The 339-residue stretch at Asp80–His418 folds into the SAM-dependent MTase PRMT-type domain. Positions 93, 102, 126, 148, and 177 each coordinate S-adenosyl-L-methionine. Residues Glu191 and Glu200 contribute to the active site. Positions Pro333 to Pro377 are disordered. Over residues Thr337 to Glu354 the composition is skewed to low complexity.

It belongs to the class I-like SAM-binding methyltransferase superfamily. Protein arginine N-methyltransferase family. PRMT6 subfamily.

Arginine methyltransferase that can both catalyze the formation of omega-N monomethylarginine (MMA) and asymmetrical dimethylarginine (aDMA). The sequence is that of Probable protein arginine N-methyltransferase 6 (PRMT6) from Arabidopsis thaliana (Mouse-ear cress).